Consider the following 87-residue polypeptide: Small ribosomal subunit protein bS20 (87 aa).

Belongs to the bacterial ribosomal protein bS20 family.

Its function is as follows. Binds directly to 16S ribosomal RNA. The protein is Small ribosomal subunit protein bS20 of Shigella flexneri serotype 5b (strain 8401).